The sequence spans 399 residues: Homeobox protein ceh-39 (399 aa).

Disordered regions lie at residues 32–91 and 158–187; these read PEPA…GDTE and AKKS…RPAS. Over residues 60–79 the composition is skewed to low complexity; that stretch reads SSMCGSSSSSSSSSYSSGSS. A DNA-binding region (CUT) is located at residues 205 to 291; that stretch reads NRQIGDDEEL…VRRALCFMKK (87 aa). Residues 315-374 constitute a DNA-binding region (homeobox); the sequence is SDERIRRFTFTQTQLDSLHTVFQQQDRPNREMQQALSATLKLNRSTVGNFFMNARRRLPK.

The protein belongs to the CUT homeobox family. In terms of tissue distribution, expressed in hermaphrodite gonads.

It localises to the nucleus. Its subcellular location is the chromosome. In terms of biological role, transcriptional regulator which is involved in the sex determination and X chromosome dosage compensation pathways. Directly binds to 5'-ATTGAT-3' sites in the promoter of sex-determining factor xol-1 to negatively regulate its expression and promote hermaphrodite development. Associates with condensed DNA during mitosis. The sequence is that of Homeobox protein ceh-39 from Caenorhabditis elegans.